Reading from the N-terminus, the 252-residue chain is 2-succinyl-6-hydroxy-2,4-cyclohexadiene-1-carboxylate synthase (252 aa).

The protein belongs to the AB hydrolase superfamily. MenH family. Monomer.

The enzyme catalyses 5-enolpyruvoyl-6-hydroxy-2-succinyl-cyclohex-3-ene-1-carboxylate = (1R,6R)-6-hydroxy-2-succinyl-cyclohexa-2,4-diene-1-carboxylate + pyruvate. Its pathway is quinol/quinone metabolism; 1,4-dihydroxy-2-naphthoate biosynthesis; 1,4-dihydroxy-2-naphthoate from chorismate: step 3/7. The protein operates within quinol/quinone metabolism; menaquinone biosynthesis. Functionally, catalyzes a proton abstraction reaction that results in 2,5-elimination of pyruvate from 2-succinyl-5-enolpyruvyl-6-hydroxy-3-cyclohexene-1-carboxylate (SEPHCHC) and the formation of 2-succinyl-6-hydroxy-2,4-cyclohexadiene-1-carboxylate (SHCHC). The protein is 2-succinyl-6-hydroxy-2,4-cyclohexadiene-1-carboxylate synthase of Salmonella typhimurium (strain LT2 / SGSC1412 / ATCC 700720).